The following is a 109-amino-acid chain: Flagellar hook-basal body complex protein FliE (109 aa).

The tract at residues 1-38 (MQAIHNDKSLLSPFSELNTDNRTKREESGNAFKEQKGG) is disordered. Residues 19–38 (TDNRTKREESGNAFKEQKGG) show a composition bias toward basic and acidic residues.

Belongs to the FliE family.

The protein resides in the bacterial flagellum basal body. This Helicobacter pylori (strain G27) protein is Flagellar hook-basal body complex protein FliE.